Consider the following 173-residue polypeptide: Lens fiber membrane intrinsic protein (173 aa).

The Cytoplasmic portion of the chain corresponds to 1 to 3 (MYS). A helical transmembrane segment spans residues 4–24 (FMGGGLFCAWVGTILLVVATA). The Extracellular segment spans residues 25–66 (TDHWMQYRLSGAFAHQGLWRYCLGTKCYLQTESIAYWNATRA). Residues Trp43 and Trp61 are each glycosylated (C-linked (Man) tryptophan; partial). Residues 67–87 (FMILSSLCATSGIIMGIVAFA) form a helical membrane-spanning segment. Residues 88 to 98 (QQPTFTRLSRP) are Cytoplasmic-facing. Residues 99–119 (FSAGIMFFASTFFVLLALAIY) form a helical membrane-spanning segment. Residues 120–140 (TGVTVSFLGRRFGDWRFSWSY) lie on the Extracellular side of the membrane. The chain crosses the membrane as a helical span at residues 141–161 (ILGWVALLMTFFAGIFYMCAY). Residues 162–173 (RMHECRRLSTPR) are Cytoplasmic-facing. Ser170 carries the post-translational modification Phosphoserine. At Thr171 the chain carries Phosphothreonine.

It belongs to the PMP-22/EMP/MP20 family. In terms of assembly, seems to be associated with itself or another lens membrane component via disulfide bonds. In terms of processing, predominantly monophosphorylated on Ser-170. Only about 15% diphosphorylated on both Ser-170 and Thr-171. C-glycosylated. Trp-43 is more extensively C-glycosylated than Trp-61. C-glycosylation may be involved in membrane trafficking. Eye lens specific.

The protein resides in the membrane. Its function is as follows. Present in the thicker 16-17 nm junctions of mammalian lens fiber cells, where it may contribute to cell junctional organization. Acts as a receptor for calmodulin. May play an important role in both lens development and cataractogenesis. The chain is Lens fiber membrane intrinsic protein (LIM2) from Bos taurus (Bovine).